The following is a 478-amino-acid chain: Aspartyl/glutamyl-tRNA(Asn/Gln) amidotransferase subunit B (478 aa).

It belongs to the GatB/GatE family. GatB subfamily. As to quaternary structure, heterotrimer of A, B and C subunits.

It catalyses the reaction L-glutamyl-tRNA(Gln) + L-glutamine + ATP + H2O = L-glutaminyl-tRNA(Gln) + L-glutamate + ADP + phosphate + H(+). It carries out the reaction L-aspartyl-tRNA(Asn) + L-glutamine + ATP + H2O = L-asparaginyl-tRNA(Asn) + L-glutamate + ADP + phosphate + 2 H(+). Allows the formation of correctly charged Asn-tRNA(Asn) or Gln-tRNA(Gln) through the transamidation of misacylated Asp-tRNA(Asn) or Glu-tRNA(Gln) in organisms which lack either or both of asparaginyl-tRNA or glutaminyl-tRNA synthetases. The reaction takes place in the presence of glutamine and ATP through an activated phospho-Asp-tRNA(Asn) or phospho-Glu-tRNA(Gln). In Dichelobacter nodosus (strain VCS1703A), this protein is Aspartyl/glutamyl-tRNA(Asn/Gln) amidotransferase subunit B.